The chain runs to 353 residues: MSILFDSNETIYPFPPKPRPLSAEAKQHYRSRIKTLLRERNAVMVAHYYTDPEIQALAEETGGCVADSLEMARFGSTHSASTLLVAGVRFMGETAKILNPEKTILMPTLEAECSLDLGCPVDEFSRFCDEHPDRMVVVYANTSAAVKARADWVVTSSIAVELIEHLDSLGEKIIWAPDRHLGSYVQKQTGADVLCWQGACIVHDEFKTQALKRMKILYPDAAILVHPESPQSVVEMADAVGSTSQLIQAAKTLPQRELIVATDRGIFYKMQQACPEKTLLEAPTAGEGATCRSCAHCPWMAMNGLEAIANGLEQGGRAHEIHVDAALREGALIPLNRMLDFAASLKLRVKGNA.

Residues H47 and S68 each contribute to the iminosuccinate site. C113 contributes to the [4Fe-4S] cluster binding site. Iminosuccinate contacts are provided by residues 139–141 and S156; that span reads YAN. C200 contacts [4Fe-4S] cluster. Iminosuccinate contacts are provided by residues 226 to 228 and T243; that span reads HPE. C297 contacts [4Fe-4S] cluster.

Belongs to the quinolinate synthase family. Type 1 subfamily. It depends on [4Fe-4S] cluster as a cofactor.

The protein resides in the cytoplasm. The enzyme catalyses iminosuccinate + dihydroxyacetone phosphate = quinolinate + phosphate + 2 H2O + H(+). It participates in cofactor biosynthesis; NAD(+) biosynthesis; quinolinate from iminoaspartate: step 1/1. Functionally, catalyzes the condensation of iminoaspartate with dihydroxyacetone phosphate to form quinolinate. The chain is Quinolinate synthase from Pectobacterium carotovorum subsp. carotovorum (strain PC1).